Here is a 148-residue protein sequence, read N- to C-terminus: Protein RESISTANCE TO POWDERY MILDEW 8.1 (148 aa).

Residues 1–148 form the RPW8 domain; it reads MPIGELAIGA…VISACSKIRA (148 aa). The helical transmembrane segment at 7-23 threads the bilayer; the sequence is AIGAVLGVGAQAIYDRF. The stretch at 120-140 forms a coiled coil; that stretch reads DDIKEIKAKISEMDTKLAEVI.

Belongs to the plant RPW8 protein family.

It localises to the membrane. Functionally, disease resistance (R) protein that induces localized, salicylic acid-dependent defenses. Confers resistance to powdery mildew (e.g. Erysiphe cichoracearum UCSC1). This is Protein RESISTANCE TO POWDERY MILDEW 8.1 from Arabidopsis thaliana (Mouse-ear cress).